Here is a 366-residue protein sequence, read N- to C-terminus: MTPEHLPTEQYDAQLAEKVVRLQSMMTPFAAPVPEVFRSPVSHYRMRAEFRIWHDGDDLYHIIFDQQTKSRIRVNSFPAASELINQLMTLMIEGVRNNPQLRHKLFQIDYLTTQSNQAIVSMLYHKKLGDEWRKEAEVLRDALRAQNINVHLIGRATKTKIMLDQDYVDERLPVAGKEMIYRQVENSFTQPNAAMNVQMLEWALSATEGSKGDLLELYCGNGNFSLALARNFERVLATEIAKPSVASAQYNIAANHIDNVQIIRMAAEEFTQAMNGEREFNRLQGIDLKSYQCETIFVDPPRSGLDSETEKMVQAYPRILYISCNPETLCKNLETLSQTHKVERLALFDQFPYTHHMECGVLLTLK.

Residues Gln-190, Tyr-218, Asn-223, Glu-239, and Asp-299 each coordinate S-adenosyl-L-methionine. Residue Cys-324 is the Nucleophile of the active site. Glu-358 serves as the catalytic Proton acceptor.

The protein belongs to the class I-like SAM-binding methyltransferase superfamily. RNA M5U methyltransferase family. TrmA subfamily.

The enzyme catalyses uridine(54) in tRNA + S-adenosyl-L-methionine = 5-methyluridine(54) in tRNA + S-adenosyl-L-homocysteine + H(+). The catalysed reaction is uridine(341) in tmRNA + S-adenosyl-L-methionine = 5-methyluridine(341) in tmRNA + S-adenosyl-L-homocysteine + H(+). Its function is as follows. Dual-specificity methyltransferase that catalyzes the formation of 5-methyluridine at position 54 (m5U54) in all tRNAs, and that of position 341 (m5U341) in tmRNA (transfer-mRNA). The polypeptide is tRNA/tmRNA (uracil-C(5))-methyltransferase (Enterobacter sp. (strain 638)).